A 54-amino-acid chain; its full sequence is Sperm protamine P3 (54 aa).

The interval 1-54 (RRRRRRGKGKGGKKKKGKKRRRRGRKGKGKGKKKGKRKGKRGGKRRRRRRKGKK) is disordered.

As to expression, gonads.

It localises to the nucleus. The protein localises to the chromosome. Functionally, protamines substitute for histones in the chromatin of sperm during the haploid phase of spermatogenesis. They compact sperm DNA into a highly condensed, stable and inactive complex. This is Sperm protamine P3 from Bolinus brandaris (Purple dye murex).